The chain runs to 131 residues: Fluoride-specific ion channel FluC 2 (131 aa).

4 helical membrane passes run 5 to 25 (FGVA…SLLV), 39 to 59 (LATL…TTLA), 70 to 90 (LAVG…AWES), and 104 to 124 (LYVL…RALA). Positions 78 and 81 each coordinate Na(+).

The protein belongs to the fluoride channel Fluc/FEX (TC 1.A.43) family.

The protein localises to the cell membrane. The catalysed reaction is fluoride(in) = fluoride(out). Its activity is regulated as follows. Na(+) is not transported, but it plays an essential structural role and its presence is essential for fluoride channel function. Its function is as follows. Fluoride-specific ion channel. Important for reducing fluoride concentration in the cell, thus reducing its toxicity. This chain is Fluoride-specific ion channel FluC 2, found in Deinococcus geothermalis (strain DSM 11300 / CIP 105573 / AG-3a).